The chain runs to 290 residues: MEDFRVRHECSSLRGTLLDSRYAKAVQCLVEEVIDIGGREVELCNNILINQLFPGRRRPGFALSSEIKSELCSSGFMSLPENHEIHIKITKLLSLLQQVEERFEQYCNQLEQVISSFEEIAGEGSSKVYTGLALQAMTRHFGSLEEAIISQLNSVRRRFIISHQDVPKIISSGLSQLSLFDGNTTSSSLQRLGLVQGPQRHAWKPIRGLPETSVAILRAWLFQHFLHPYPNEAEKLVLASQTGLSKNQVSNWFINARVRLWKPMIEEMYREEFGDSLDESMQREANDDSN.

Positions S20 to I36 are SR/KY domain. Residues E81–L152 are BELL domain. Positions A202 to M264 form a DNA-binding region, homeobox.

This sequence belongs to the TALE/BELL homeobox family. May form heterodimeric complexes with TALE/KNOX proteins.

The protein resides in the nucleus. In Arabidopsis thaliana (Mouse-ear cress), this protein is BEL1-like homeodomain protein 11 (BLH11).